Here is a 188-residue protein sequence, read N- to C-terminus: Peptidyl-tRNA hydrolase (188 aa).

Tyr-14 is a binding site for tRNA. His-19 (proton acceptor) is an active-site residue. 3 residues coordinate tRNA: Tyr-64, Asn-66, and Asn-112.

Belongs to the PTH family. As to quaternary structure, monomer.

The protein resides in the cytoplasm. It catalyses the reaction an N-acyl-L-alpha-aminoacyl-tRNA + H2O = an N-acyl-L-amino acid + a tRNA + H(+). Its function is as follows. Hydrolyzes ribosome-free peptidyl-tRNAs (with 1 or more amino acids incorporated), which drop off the ribosome during protein synthesis, or as a result of ribosome stalling. Catalyzes the release of premature peptidyl moieties from peptidyl-tRNA molecules trapped in stalled 50S ribosomal subunits, and thus maintains levels of free tRNAs and 50S ribosomes. This Clostridium perfringens (strain SM101 / Type A) protein is Peptidyl-tRNA hydrolase.